A 358-amino-acid chain; its full sequence is Holliday junction branch migration complex subunit RuvB (358 aa).

A disordered region spans residues 1–24; it reads MSIQTDDFAAPPPKRILSGAPASP. A large ATPase domain (RuvB-L) region spans residues 5–194; it reads TDDFAAPPPK…FGIVARLEFY (190 aa). ATP-binding positions include leucine 33, arginine 34, glycine 75, lysine 78, threonine 79, threonine 80, 141-143, arginine 184, tyrosine 194, and arginine 231; that span reads EDY. Threonine 79 contacts Mg(2+). A small ATPAse domain (RuvB-S) region spans residues 195–265; the sequence is SPEELASIVR…IAHRALVMLD (71 aa). A head domain (RuvB-H) region spans residues 268–358; that stretch reads PQGFDLMDRK…GDMFGAMRPE (91 aa). DNA-binding residues include arginine 304, arginine 323, and arginine 328.

The protein belongs to the RuvB family. In terms of assembly, homohexamer. Forms an RuvA(8)-RuvB(12)-Holliday junction (HJ) complex. HJ DNA is sandwiched between 2 RuvA tetramers; dsDNA enters through RuvA and exits via RuvB. An RuvB hexamer assembles on each DNA strand where it exits the tetramer. Each RuvB hexamer is contacted by two RuvA subunits (via domain III) on 2 adjacent RuvB subunits; this complex drives branch migration. In the full resolvosome a probable DNA-RuvA(4)-RuvB(12)-RuvC(2) complex forms which resolves the HJ.

It localises to the cytoplasm. It carries out the reaction ATP + H2O = ADP + phosphate + H(+). Its function is as follows. The RuvA-RuvB-RuvC complex processes Holliday junction (HJ) DNA during genetic recombination and DNA repair, while the RuvA-RuvB complex plays an important role in the rescue of blocked DNA replication forks via replication fork reversal (RFR). RuvA specifically binds to HJ cruciform DNA, conferring on it an open structure. The RuvB hexamer acts as an ATP-dependent pump, pulling dsDNA into and through the RuvAB complex. RuvB forms 2 homohexamers on either side of HJ DNA bound by 1 or 2 RuvA tetramers; 4 subunits per hexamer contact DNA at a time. Coordinated motions by a converter formed by DNA-disengaged RuvB subunits stimulates ATP hydrolysis and nucleotide exchange. Immobilization of the converter enables RuvB to convert the ATP-contained energy into a lever motion, pulling 2 nucleotides of DNA out of the RuvA tetramer per ATP hydrolyzed, thus driving DNA branch migration. The RuvB motors rotate together with the DNA substrate, which together with the progressing nucleotide cycle form the mechanistic basis for DNA recombination by continuous HJ branch migration. Branch migration allows RuvC to scan DNA until it finds its consensus sequence, where it cleaves and resolves cruciform DNA. The polypeptide is Holliday junction branch migration complex subunit RuvB (Albidiferax ferrireducens (strain ATCC BAA-621 / DSM 15236 / T118) (Rhodoferax ferrireducens)).